Consider the following 1115-residue polypeptide: Eukaryotic translation initiation factor 2-alpha kinase 3 (1115 aa).

The N-terminal stretch at 1–29 (MERATGPGSLARTLLLPLLLGLVAGTVTA) is a signal peptide. The Extracellular segment spans residues 30–514 (RRTSDLLAPT…PNYKNIRKKD (485 aa)). Positions 74–101 (SEALPAAAGEQEAREPEPEPEEEPDIRP) are disordered. N-linked (GlcNAc...) asparagine glycosylation occurs at N259. The chain crosses the membrane as a helical span at residues 515–535 (PVLLLHWWKEIVGTIVFCIVA). The Cytoplasmic portion of the chain corresponds to 536 to 1115 (TTFIVRRLFH…SSPHSPLPSN (580 aa)). The region spanning 593-1076 (FEPIQCMGRG…AASIIENAIF (484 aa)) is the Protein kinase domain. Residue 599-607 (MGRGGFGVV) coordinates ATP. The residue at position 619 (Y619) is a Phosphotyrosine; by autocatalysis. An ATP-binding site is contributed by K622. An insert loop region spans residues 647-887 (EHPGIVRYFN…SPKVYLYIQM (241 aa)). At S715 the chain carries Phosphoserine. T802 is modified (phosphothreonine). Disordered stretches follow at residues 807–832 (VFEDSGCDNASSKEEPRMNQPPVGNH) and 841–860 (RHSGSKSSEPTVSVSPSRPT). The span at 845 to 860 (SKSSEPTVSVSPSRPT) shows a compositional bias: polar residues. The active-site Proton acceptor is the D936. Residue T981 is modified to Phosphothreonine. Positions 1087 to 1115 (LRQRSRSMSSPGAKHSRHSSSPHSPLPSN) are disordered. The residue at position 1093 (S1093) is a Phosphoserine.

The protein belongs to the protein kinase superfamily. Ser/Thr protein kinase family. GCN2 subfamily. Forms dimers with HSPA5/BIP in resting cells. Homotetramerizes in response to endoplasmic reticulum (ER) stress, leading to its activation. Interacts with HSP90B1/GRP94. Interacts with DNAJC3; inhibiting EIF2AK3/PERK activity. Interacts with ATAD3A; ATAD3A and EIF2S1/eIF-2-alpha occupy a common binding site within the cytoplasmic loop of EIF2AK3/PERK, leading to prevent EIF2AK3/PERK association with its substrate EIF2S1/eIF-2-alpha. Interacts with MFN2. Interacts with TMEM33. Interacts with PDIA6. Interacts with LACC1. Oligomerization of the N-terminal ER luminal domain by ER stress promotes EIF2AK3/PERK trans-autophosphorylation of the C-terminal cytoplasmic kinase domain at multiple residues including Thr-981 on the kinase activation loop. Autophosphorylated at Tyr-619 following endoplasmic reticulum stress, leading to activate its activity. Dephosphorylated at Tyr-619 by PTPN1/PTP1B, leading to inactivate its enzyme activity. Phosphorylation at Thr-802 by AKT (AKT1, AKT2 and/or AKT3) inactivates EIF2AK3/PERK. Post-translationally, ADP-ribosylated by PARP16 upon ER stress, which increases kinase activity.

The protein localises to the endoplasmic reticulum membrane. It carries out the reaction L-seryl-[protein] + ATP = O-phospho-L-seryl-[protein] + ADP + H(+). The catalysed reaction is L-threonyl-[protein] + ATP = O-phospho-L-threonyl-[protein] + ADP + H(+). The enzyme catalyses L-tyrosyl-[protein] + ATP = O-phospho-L-tyrosyl-[protein] + ADP + H(+). Inhibited by HSPA5/BIP in absence of stress. Perturbation in protein folding in the endoplasmic reticulum (ER) promotes reversible dissociation from HSPA5/BIP and oligomerization, resulting in trans-autophosphorylation and kinase activity induction. Inactivated following phosphorylation at Thr-802 by AKT (AKT1, AKT2 and/or AKT3). Inhibited by ATAD3A at mitochondria-endoplasmic reticulum contact sites, providing a safe haven for mitochondrial protein translation during ER stress. Its function is as follows. Metabolic-stress sensing protein kinase that phosphorylates the alpha subunit of eukaryotic translation initiation factor 2 (EIF2S1/eIF-2-alpha) in response to various stress, such as unfolded protein response (UPR). Key effector of the integrated stress response (ISR) to unfolded proteins: EIF2AK3/PERK specifically recognizes and binds misfolded proteins, leading to its activation and EIF2S1/eIF-2-alpha phosphorylation. EIF2S1/eIF-2-alpha phosphorylation in response to stress converts EIF2S1/eIF-2-alpha in a global protein synthesis inhibitor, leading to a global attenuation of cap-dependent translation, while concomitantly initiating the preferential translation of ISR-specific mRNAs, such as the transcriptional activators ATF4 and QRICH1, and hence allowing ATF4- and QRICH1-mediated reprogramming. The EIF2AK3/PERK-mediated unfolded protein response increases mitochondrial oxidative phosphorylation by promoting ATF4-mediated expression of COX7A2L/SCAF1, thereby increasing formation of respiratory chain supercomplexes. In contrast to most subcellular compartments, mitochondria are protected from the EIF2AK3/PERK-mediated unfolded protein response due to EIF2AK3/PERK inhibition by ATAD3A at mitochondria-endoplasmic reticulum contact sites. In addition to EIF2S1/eIF-2-alpha, also phosphorylates NFE2L2/NRF2 in response to stress, promoting release of NFE2L2/NRF2 from the BCR(KEAP1) complex, leading to nuclear accumulation and activation of NFE2L2/NRF2. Serves as a critical effector of unfolded protein response (UPR)-induced G1 growth arrest due to the loss of cyclin-D1 (CCND1). Involved in control of mitochondrial morphology and function. In Bos taurus (Bovine), this protein is Eukaryotic translation initiation factor 2-alpha kinase 3.